The chain runs to 310 residues: 26S proteasome non-ATPase regulatory subunit 14 (310 aa).

The region spanning 31–166 (VYISSLALLK…IDAFRLINAN (136 aa)) is the MPN domain. His-113, His-115, and Asp-126 together coordinate Zn(2+). Residues 113 to 126 (HSHPGFGCWLSGVD) carry the JAMM motif motif. A phosphoserine mark is found at Ser-150 and Ser-224. The residue at position 266 (Thr-266) is a Phosphothreonine.

The protein belongs to the peptidase M67A family. PSMD14 subfamily. Component of the 19S proteasome regulatory particle complex. The 26S proteasome consists of a 20S core particle (CP) and two 19S regulatory subunits (RP). The regulatory particle is made of a lid composed of 9 subunits including PSMD4, a base containing 6 ATPases and few additional components. Within the complex, PSMD4 interacts with subunit PSMD7 through their respective MPN domain. Interacts with TXNL1. Widely expressed. Highest levels in heart and skeletal muscle.

Functionally, component of the 26S proteasome, a multiprotein complex involved in the ATP-dependent degradation of ubiquitinated proteins. This complex plays a key role in the maintenance of protein homeostasis by removing misfolded or damaged proteins, which could impair cellular functions, and by removing proteins whose functions are no longer required. Therefore, the proteasome participates in numerous cellular processes, including cell cycle progression, apoptosis, or DNA damage repair. The PSMD14 subunit is a metalloprotease that specifically cleaves 'Lys-63'-linked polyubiquitin chains within the complex. Plays a role in response to double-strand breaks (DSBs): acts as a regulator of non-homologous end joining (NHEJ) by cleaving 'Lys-63'-linked polyubiquitin, thereby promoting retention of JMJD2A/KDM4A on chromatin and restricting TP53BP1 accumulation. Also involved in homologous recombination repair by promoting RAD51 loading. The chain is 26S proteasome non-ATPase regulatory subunit 14 (PSMD14) from Homo sapiens (Human).